Consider the following 1305-residue polypeptide: Contactin-associated protein like 5-1 (1305 aa).

A signal peptide spans 1–24 (MDSLQRLNGLLTLVLSALWHLGLT). The 150-residue stretch at 25 to 174 (ASNYNCDDPL…IGMRVEAYGC (150 aa)) folds into the F5/8 type C domain. Laminin G-like domains are found at residues 180–360 (VADF…TFSC) and 367–544 (PITF…IDLC). An N-linked (GlcNAc...) asparagine glycan is attached at asparagine 282. Cysteines 329 and 360 form a disulfide. Asparagine 496 carries an N-linked (GlcNAc...) asparagine glycan. 3 disulfide bridges follow: cysteine 512/cysteine 544, cysteine 550/cysteine 561, and cysteine 555/cysteine 570. The 38-residue stretch at 546–583 (IKDRCLPNYCEHGGHCAQTWTTFYCNCSDTGYTGATCH) folds into the EGF-like 1 domain. N-linked (GlcNAc...) asparagine glycosylation is present at asparagine 571. A disulfide bond links cysteine 572 and cysteine 582. The Fibrinogen C-terminal domain occupies 584–790 (DSIYEQSCEV…LRCNGDRHFW (207 aa)). Asparagine 622 carries an N-linked (GlcNAc...) asparagine glycan. The 166-residue stretch at 791–956 (NAVSFSTEAS…KLMSGVTPGC (166 aa)) folds into the Laminin G-like 3 domain. 4 disulfides stabilise this stretch: cysteine 929–cysteine 956, cysteine 960–cysteine 973, cysteine 967–cysteine 982, and cysteine 984–cysteine 994. One can recognise an EGF-like 2 domain in the interval 957-995 (PGHCSSYSSNCHNGGKCVEKQSGYSCDCTNSPNEGPFCQ). Residues 1014 to 1198 (EPYLVIKNTS…VHGTLTESGC (185 aa)) form the Laminin G-like 4 domain. Asparagine 1057 carries an N-linked (GlcNAc...) asparagine glycan. Cysteine 1163 and cysteine 1198 are disulfide-bonded. Residues 1238–1258 (VIGGIIAVVTFVTFCVIGIMI) traverse the membrane as a helical segment.

This sequence belongs to the neurexin family.

It localises to the membrane. May play a role in the correct development and proper functioning of the peripheral and central nervous system and be involved in cell adhesion and intercellular communication. The protein is Contactin-associated protein like 5-1 (Cntnap5a) of Rattus norvegicus (Rat).